A 124-amino-acid chain; its full sequence is Large ribosomal subunit protein uL18 (124 aa).

It belongs to the universal ribosomal protein uL18 family. As to quaternary structure, part of the 50S ribosomal subunit; part of the 5S rRNA/L5/L18/L25 subcomplex. Contacts the 5S and 23S rRNAs.

Functionally, this is one of the proteins that bind and probably mediate the attachment of the 5S RNA into the large ribosomal subunit, where it forms part of the central protuberance. This chain is Large ribosomal subunit protein uL18, found in Parafrankia sp. (strain EAN1pec).